Reading from the N-terminus, the 207-residue chain is Recombination protein RecR (207 aa).

The segment at 60–75 (CRHCHNISDSDVCTIC) adopts a C4-type zinc-finger fold. Positions 83 to 178 (STLCVVENIR…RVSVIARGIA (96 aa)) constitute a Toprim domain.

The protein belongs to the RecR family.

Functionally, may play a role in DNA repair. It seems to be involved in an RecBC-independent recombinational process of DNA repair. It may act with RecF and RecO. The polypeptide is Recombination protein RecR (Porphyromonas gingivalis (strain ATCC BAA-308 / W83)).